The following is a 103-amino-acid chain: Large ribosomal subunit protein bL21 (103 aa).

This sequence belongs to the bacterial ribosomal protein bL21 family. Part of the 50S ribosomal subunit. Contacts protein L20.

This protein binds to 23S rRNA in the presence of protein L20. The protein is Large ribosomal subunit protein bL21 of Yersinia enterocolitica serotype O:8 / biotype 1B (strain NCTC 13174 / 8081).